A 331-amino-acid chain; its full sequence is MKTSIRYALLAAALTAATPALADITVYNGQHKEAAQAVADAFTRATGIKVKLNSAKGDQLAGQIKEEGSRSPADVFYSEQIPALATLSAANLLEPLPASTINETRGKGVPVAAKKDWVALSGRSRVVVYDTRKLSEKDLEKSVLNYATPKWKNRIGYAPTSGAFLEQVVAIVKLKGEAAALKWLKGLKEYGKPYAKNSVALQAVENGEIDAALINNYYWHAFAREKGVQNVHTRLNFVRHRDPGALVTYSGAAVLKSSQNKDEAKKFVAFLASKEGQRALTAVRAEYPLNPHVVSTFNLEPIAKLEAPQVSATTVSEKEHATRLLEQAGMK.

An N-terminal signal peptide occupies residues 1-22; the sequence is MKTSIRYALLAAALTAATPALA. 4 residues coordinate Fe cation: His-31, Glu-79, Tyr-217, and Tyr-218.

It belongs to the bacterial solute-binding protein 1 family.

It localises to the periplasm. Its function is as follows. This protein may be a central component in the iron-acquisition system. This chain is Major ferric iron-binding protein (fbpA), found in Neisseria meningitidis serogroup B (strain ATCC BAA-335 / MC58).